The sequence spans 390 residues: NADH-quinone oxidoreductase subunit D (390 aa).

This sequence belongs to the complex I 49 kDa subunit family. In terms of assembly, NDH-1 is composed of 14 different subunits. Subunits NuoB, C, D, E, F, and G constitute the peripheral sector of the complex.

The protein localises to the cell membrane. It catalyses the reaction a quinone + NADH + 5 H(+)(in) = a quinol + NAD(+) + 4 H(+)(out). Its function is as follows. NDH-1 shuttles electrons from NADH, via FMN and iron-sulfur (Fe-S) centers, to quinones in the respiratory chain. The immediate electron acceptor for the enzyme in this species is believed to be ubiquinone. Couples the redox reaction to proton translocation (for every two electrons transferred, four hydrogen ions are translocated across the cytoplasmic membrane), and thus conserves the redox energy in a proton gradient. The chain is NADH-quinone oxidoreductase subunit D from Wolbachia pipientis subsp. Culex pipiens (strain wPip).